Here is a 1873-residue protein sequence, read N- to C-terminus: Voltage-dependent L-type calcium channel subunit alpha-1S (1873 aa).

The disordered stretch occupies residues Met-1–Ile-23. The Cytoplasmic segment spans residues Met-1–Lys-51. Residues Asn-38 to Phe-337 form an I repeat. A helical membrane pass occupies residues Pro-52–Val-70. Residues Tyr-71–Gly-85 are Extracellular-facing. Asn-79 carries N-linked (GlcNAc...) asparagine glycosylation. The chain crosses the membrane as a helical span at residues Leu-86 to Ile-106. The Cytoplasmic segment spans residues Ala-107–Asp-115. A helical transmembrane segment spans residues Ala-116–Thr-136. At Val-137 to Asp-160 the chain is on the extracellular side. Residues Val-161–Val-179 form a helical membrane-spanning segment. At Pro-180 to Leu-196 the chain is on the cytoplasmic side. A helical membrane pass occupies residues Phe-197 to Phe-218. Topologically, residues Lys-219–Gly-279 are extracellular. 2 disulfide bridges follow: Cys-226/Cys-254 and Cys-245/Cys-261. Asn-257 carries N-linked (GlcNAc...) asparagine glycosylation. The pore-forming intramembrane region spans Phe-280–Val-301. The short motif at Thr-290–Gly-293 is the Selectivity filter of repeat I element. Glu-292 serves as a coordination point for Ca(2+). Over Asn-302–Trp-309 the chain is Extracellular. The chain crosses the membrane as a helical span at residues Pro-310–Leu-330. The Cytoplasmic segment spans residues Gly-331–Lys-432. The segment at Gln-357–Glu-374 is binding to the beta subunit. Phosphoserine is present on residues Ser-393 and Ser-397. The stretch at Asn-418–Leu-664 is one II repeat. Residues Val-433–Ser-451 form a helical membrane-spanning segment. At Glu-452–Arg-462 the chain is on the extracellular side. A helical membrane pass occupies residues Leu-463–Met-483. Residues Tyr-484 to Ser-494 lie on the Cytoplasmic side of the membrane. The chain crosses the membrane as a helical span at residues Ile-495–Val-514. At Glu-515–Gly-523 the chain is on the extracellular side. The helical transmembrane segment at Ile-524–Trp-542 threads the bilayer. Topologically, residues Thr-543 to Ser-561 are cytoplasmic. A helical transmembrane segment spans residues Leu-562–Phe-581. Over Gly-582–Pro-601 the chain is Extracellular. The pore-forming intramembrane region spans Gln-602–Gly-623. Positions Thr-612–Asp-615 match the Selectivity filter of repeat II motif. Glu-614 serves as a coordination point for Ca(2+). Over Ile-624 to Pro-633 the chain is Extracellular. The helical transmembrane segment at Gly-634–Leu-653 threads the bilayer. Residues Asn-654 to Thr-799 lie on the Cytoplasmic side of the membrane. 2 disordered regions span residues Lys-675–Thr-717 and Glu-731–Arg-757. Ser-687 is subject to Phosphoserine; by PKA. The span at Leu-690–Gly-711 shows a compositional bias: basic and acidic residues. Residues Pro-742–Glu-751 show a composition bias toward acidic residues. The tract at residues Glu-747–Pro-760 is interaction with STAC, STAC2 and STAC3 (via SH3 domains). Residues Asn-786–Phe-1068 form an III repeat. Residues Trp-800–Ala-818 form a helical membrane-spanning segment. Residues Glu-819–Gln-830 lie on the Extracellular side of the membrane. A helical membrane pass occupies residues Ile-831–Lys-850. Residues Met-851–Asn-866 lie on the Cytoplasmic side of the membrane. The helical transmembrane segment at Tyr-867 to Leu-885 threads the bilayer. Residues Glu-886–Val-892 are Extracellular-facing. A helical transmembrane segment spans residues Val-893 to Ala-911. Residues Lys-912 to Asn-930 lie on the Cytoplasmic side of the membrane. The helical transmembrane segment at Ile-931–Phe-950 threads the bilayer. The Extracellular segment spans residues Lys-951–Val-1000. Cys-957 and Cys-968 are oxidised to a cystine. The tract at residues Arg-988–Lys-1077 is dihydropyridine binding. An intramembrane region (pore-forming) is located at residues Leu-1001–Tyr-1021. The Selectivity filter of repeat III signature appears at Thr-1012–Gly-1015. Glu-1014 is a binding site for Ca(2+). Residues Lys-1022–Arg-1038 lie on the Extracellular side of the membrane. Residues Val-1039–Phe-1060 traverse the membrane as a helical segment. At Val-1061–Ser-1118 the chain is on the cytoplasmic side. The IV repeat unit spans residues Asn-1105–Phe-1384. The chain crosses the membrane as a helical span at residues Tyr-1119 to Tyr-1140. Asn-1141 carries an N-linked (GlcNAc...) asparagine glycan. Residues Asn-1141–His-1148 lie on the Extracellular side of the membrane. Residues Ile-1149–Met-1170 form a helical membrane-spanning segment. Residues Ala-1171 to Asp-1180 lie on the Cytoplasmic side of the membrane. The helical transmembrane segment at Pro-1181–Ser-1200 threads the bilayer. Residues Glu-1201–Ser-1231 are Extracellular-facing. The helical transmembrane segment at Ser-1232 to Ala-1250 threads the bilayer. The Cytoplasmic portion of the chain corresponds to Glu-1251 to Pro-1268. A helical membrane pass occupies residues Tyr-1269–Phe-1289. Topologically, residues Gly-1290–Gln-1311 are extracellular. An intramembrane region (pore-forming) is located at residues Ala-1312–Leu-1330. The short motif at Thr-1321–Ala-1324 is the Selectivity filter of repeat IV element. Topologically, residues Ala-1331–Phe-1356 are extracellular. Positions Leu-1337 to Lys-1403 are dihydropyridine binding. An intrachain disulfide couples Cys-1338 to Cys-1352. A phenylalkylamine binding region spans residues Glu-1349 to Trp-1391. A helical membrane pass occupies residues Ala-1357 to Met-1381. Over Asp-1382–Leu-1873 the chain is Cytoplasmic. The interaction with calmodulin stretch occupies residues Lys-1522–Glu-1542. Position 1575 is a phosphoserine; by PKA and CAMK2 (Ser-1575). Residue Ser-1617 is modified to Phosphoserine; by PKA. Positions Met-1731 to Ser-1780 are disordered. Basic and acidic residues predominate over residues Pro-1751 to Thr-1776.

This sequence belongs to the calcium channel alpha-1 subunit (TC 1.A.1.11) family. CACNA1S subfamily. As to quaternary structure, component of a calcium channel complex consisting of a pore-forming alpha subunit (CACNA1S) and the ancillary subunits CACNB1 or CACNB2, CACNG1 and CACNA2D1. The channel complex contains alpha, beta, gamma and delta subunits in a 1:1:1:1 ratio, i.e. it contains either CACNB1 or CACNB2. CACNA1S channel activity is modulated by the auxiliary subunits (CACNB1 or CACNB2, CACNG1 and CACNA2D1). Interacts with DYSF and JSRP1. Interacts with RYR1. Interacts with STAC, STAC2 and STAC3 (via their SH3 domains). Interacts with CALM. Post-translationally, the alpha-1S subunit is found in two isoforms in the skeletal muscle: a minor form of 212 kDa containing the complete amino acid sequence, and a major form of 190 kDa derived from the full-length form by post-translational proteolysis close to Phe-1690. Phosphorylated. Phosphorylation by PKA activates the calcium channel. Both the minor and major forms are phosphorylated in vitro by PKA. Phosphorylation at Ser-1575 is involved in beta-adrenergic-mediated regulation of the channel. In terms of tissue distribution, skeletal muscle specific.

The protein localises to the cell membrane. The protein resides in the sarcolemma. It is found in the T-tubule. The enzyme catalyses Ca(2+)(in) = Ca(2+)(out). Its activity is regulated as follows. Channel activity is blocked by dihydropyridines (DHP), phenylalkylamines, and by benzothiazepines. In terms of biological role, pore-forming, alpha-1S subunit of the voltage-gated calcium channel that gives rise to L-type calcium currents in skeletal muscle. Calcium channels containing the alpha-1S subunit play an important role in excitation-contraction coupling in skeletal muscle via their interaction with RYR1, which triggers Ca(2+) release from the sarcoplasmic reticulum and ultimately results in muscle contraction. Long-lasting (L-type) calcium channels belong to the 'high-voltage activated' (HVA) group. The protein is Voltage-dependent L-type calcium channel subunit alpha-1S (CACNA1S) of Homo sapiens (Human).